The primary structure comprises 235 residues: Adenosine 5'-phosphosulfate reductase (235 aa).

Residues Cys121, Cys122, Cys204, and Cys207 each coordinate [4Fe-4S] cluster. The active-site Nucleophile; cysteine thiosulfonate intermediate is Cys230.

The protein belongs to the PAPS reductase family. CysH subfamily. The cofactor is [4Fe-4S] cluster.

The protein resides in the cytoplasm. It carries out the reaction [thioredoxin]-disulfide + sulfite + AMP + 2 H(+) = adenosine 5'-phosphosulfate + [thioredoxin]-dithiol. It participates in sulfur metabolism; hydrogen sulfide biosynthesis; sulfite from sulfate. Functionally, catalyzes the formation of sulfite from adenosine 5'-phosphosulfate (APS) using thioredoxin as an electron donor. The chain is Adenosine 5'-phosphosulfate reductase from Anoxybacillus flavithermus (strain DSM 21510 / WK1).